The sequence spans 285 residues: NADPH-dependent 7-cyano-7-deazaguanine reductase (285 aa).

80–82 provides a ligand contact to substrate; the sequence is VES. Position 82–83 (82–83) interacts with NADPH; sequence SK. The active-site Thioimide intermediate is the Cys-191. The active-site Proton donor is Asp-198. 231-232 serves as a coordination point for substrate; that stretch reads HE. 260 to 261 serves as a coordination point for NADPH; that stretch reads RG.

It belongs to the GTP cyclohydrolase I family. QueF type 2 subfamily. In terms of assembly, homodimer.

Its subcellular location is the cytoplasm. It catalyses the reaction 7-aminomethyl-7-carbaguanine + 2 NADP(+) = 7-cyano-7-deazaguanine + 2 NADPH + 3 H(+). It functions in the pathway tRNA modification; tRNA-queuosine biosynthesis. Catalyzes the NADPH-dependent reduction of 7-cyano-7-deazaguanine (preQ0) to 7-aminomethyl-7-deazaguanine (preQ1). This Psychrobacter arcticus (strain DSM 17307 / VKM B-2377 / 273-4) protein is NADPH-dependent 7-cyano-7-deazaguanine reductase.